Here is a 37-residue protein sequence, read N- to C-terminus: Cytochrome b6-f complex subunit 5 (37 aa).

The chain crosses the membrane as a helical span at residues 5–25; the sequence is LLSGIVLGLMPVTLAGLFTTA.

Belongs to the PetG family. The 4 large subunits of the cytochrome b6-f complex are cytochrome b6, subunit IV (17 kDa polypeptide, PetD), cytochrome f and the Rieske protein, while the 4 small subunits are PetG, PetL, PetM and PetN. The complex functions as a dimer.

The protein localises to the plastid. Its subcellular location is the chloroplast thylakoid membrane. Component of the cytochrome b6-f complex, which mediates electron transfer between photosystem II (PSII) and photosystem I (PSI), cyclic electron flow around PSI, and state transitions. PetG is required for either the stability or assembly of the cytochrome b6-f complex. The sequence is that of Cytochrome b6-f complex subunit 5 from Ostreococcus tauri.